A 360-amino-acid polypeptide reads, in one-letter code: Protein RecA (360 aa).

Residue 66–73 (GPESSGKT) participates in ATP binding. The disordered stretch occupies residues 330-360 (DAKAIEERENPEKVKQDKEVPVNKDASDEKK).

This sequence belongs to the RecA family.

It is found in the cytoplasm. Can catalyze the hydrolysis of ATP in the presence of single-stranded DNA, the ATP-dependent uptake of single-stranded DNA by duplex DNA, and the ATP-dependent hybridization of homologous single-stranded DNAs. It interacts with LexA causing its activation and leading to its autocatalytic cleavage. This Lactobacillus johnsonii (strain CNCM I-12250 / La1 / NCC 533) protein is Protein RecA.